A 517-amino-acid chain; its full sequence is Cytochrome P450 monooxygenase calE (517 aa).

Asn-8 carries an N-linked (GlcNAc...) asparagine glycan. The chain crosses the membrane as a helical span at residues 14-34 (SLMHHYILIAILVASIIAMVV). Cys-458 contacts heme.

Belongs to the cytochrome P450 family. It depends on heme as a cofactor.

The protein localises to the membrane. The protein operates within secondary metabolite biosynthesis. Cytochrome P450 monooxygenase; part of the gene cluster that mediates the biosynthesis of calbistrin A and related compounds. Calbistrin A is a secondary metabolite with an interesting structure that was recently found to have bioactivity against leukemia cells. It consists of two polyketides linked by an ester bond: a bicyclic decalin containing polyketide and a linear 12 carbon dioic acid structure. The polyketide synthase calA is probably responsible for forming the decalin moiety. Because calA lacks a designated enoylreductase (ER) domain, the required activity is provided by the trans-enoyl reductase calK. Following release from the PKS, calF then probably catalyzes the oxidation and the subsequent Diels Alder cycloisomerization that lead to the formation of the decalin moiety. The decalin polyketide backbone includes two C-methyl groups, at C7 and C11 in backbone, of which the C7 position is probably methylated by the methyltransferase domain of calA. A candidate for adding the methyl group at C11, if not done by CalA, is the cluster methyltransferase calH. Several additional tailoring enzymes within the cluster could be involved in the modification of the decalin polyketide product. Those include the 3 cytochrome P450 monooxygenases CalE, CalG and CalL, of which one might be responsible for the introduction of the extra hydroxyl group attached to the backbone of the decalin moiety, at position C9 in the backbone, that allows for attachment of the linear moiety. One tailoring enzyme activity that is expected to be involved in biosynthesis of calbistrin is an acyltransferase for connecting the two polyketide synthase products, and which could be performed by the cluster acyltransferase calJ. The enzyme responsible for the biosynthesis of the linear moiety, probably a second PKS, has not been identified yet. The sequence is that of Cytochrome P450 monooxygenase calE from Penicillium decumbens.